Here is a 590-residue protein sequence, read N- to C-terminus: Pentatricopeptide repeat-containing protein At2g46050, mitochondrial (590 aa).

A mitochondrion-targeting transit peptide spans 1–109 (MRFTFLRSTR…RNIVTWNILI (109 aa)). PPR repeat units follow at residues 141 to 175 (DHVS…GLES), 176 to 206 (SCFP…VLDR), 207 to 241 (DLVL…KNRF), 244 to 266 (DYFT…IHAI), 275 to 305 (DIPV…MVVR), 306 to 340 (NVVS…NLQP), 341 to 375 (DELT…GSAD), 376 to 406 (FLSV…IREP), 407 to 437 (DLVS…MLQK), 441 to 471 (DKIT…MTEF), and 477 to 507 (EDEH…MPTE). The type E motif stretch occupies residues 512–588 (ALAAFTGGCN…TPGCSWLGDY (77 aa)).

The protein belongs to the PPR family. PCMP-E subfamily.

It is found in the mitochondrion. The chain is Pentatricopeptide repeat-containing protein At2g46050, mitochondrial (PCMP-E39) from Arabidopsis thaliana (Mouse-ear cress).